Consider the following 461-residue polypeptide: UDP-glucose 6-dehydrogenase TuaD (461 aa).

NAD(+) contacts are provided by residues 3–20, Val12, Asp31, Lys36, Thr122, and Glu156; that span reads KIAVIGTGYVGLVSGTCF. Substrate is bound by residues 152-156, Lys205, Asn209, 250-254, and Gly258; these read EFLRE and FLKAG. Residue Cys261 is the Nucleophile of the active site. An NAD(+)-binding site is contributed by Lys264. Lys321 is a substrate binding site. Arg328 lines the NAD(+) pocket.

It belongs to the UDP-glucose/GDP-mannose dehydrogenase family. Phosphorylated by YwqD and dephosphorylated by YwqE in vitro.

Its subcellular location is the cytoplasm. It carries out the reaction UDP-alpha-D-glucose + 2 NAD(+) + H2O = UDP-alpha-D-glucuronate + 2 NADH + 3 H(+). Its pathway is nucleotide-sugar biosynthesis; UDP-alpha-D-glucuronate biosynthesis; UDP-alpha-D-glucuronate from UDP-alpha-D-glucose: step 1/1. Its activity is regulated as follows. Activated by phosphorylation; inhibited by dephosphorylation. Its function is as follows. Catalyzes the conversion of UDP-glucose into UDP-glucuronate, one of the precursors of teichuronic acid. The polypeptide is UDP-glucose 6-dehydrogenase TuaD (tuaD) (Bacillus subtilis (strain 168)).